Here is a 256-residue protein sequence, read N- to C-terminus: Thiazole synthase (256 aa).

The active-site Schiff-base intermediate with DXP is the Lys-95. 1-deoxy-D-xylulose 5-phosphate-binding positions include Gly-156, 182 to 183 (AG), and 204 to 205 (NT).

It belongs to the ThiG family. Homotetramer. Forms heterodimers with either ThiH or ThiS.

It localises to the cytoplasm. The enzyme catalyses [ThiS sulfur-carrier protein]-C-terminal-Gly-aminoethanethioate + 2-iminoacetate + 1-deoxy-D-xylulose 5-phosphate = [ThiS sulfur-carrier protein]-C-terminal Gly-Gly + 2-[(2R,5Z)-2-carboxy-4-methylthiazol-5(2H)-ylidene]ethyl phosphate + 2 H2O + H(+). Its pathway is cofactor biosynthesis; thiamine diphosphate biosynthesis. In terms of biological role, catalyzes the rearrangement of 1-deoxy-D-xylulose 5-phosphate (DXP) to produce the thiazole phosphate moiety of thiamine. Sulfur is provided by the thiocarboxylate moiety of the carrier protein ThiS. In vitro, sulfur can be provided by H(2)S. The polypeptide is Thiazole synthase (Klebsiella pneumoniae (strain 342)).